The following is a 491-amino-acid chain: CRM-domain containing factor CFM9, mitochondrial (491 aa).

A mitochondrion-targeting transit peptide spans 1–25 (MNQVFKGWSRGMSTSRGRSMRSKVE). Residues 1–34 (MNQVFKGWSRGMSTSRGRSMRSKVESRMRKESGK) are disordered. Residues 22-34 (SKVESRMRKESGK) are compositionally biased toward basic and acidic residues. In terms of domain architecture, CRM spans 90–187 (ELFTSEQVQA…RNYRQPKNLI (98 aa)). The segment covering 255–265 (PYVFHGDKQSE) has biased composition (basic and acidic residues). 2 disordered regions span residues 255-287 (PYVF…DQEE) and 328-491 (RSRT…WDSD). Acidic residues predominate over residues 277-287 (EPGDEDSDQEE). A compositionally biased stretch (basic and acidic residues) spans 345-359 (RRNDRDTHSQRRPND). Residues 360 to 375 (SDDDDDDGELDSEDDE) are compositionally biased toward acidic residues. The span at 392–416 (RPREDFKRRSPDPRPRPRAQVRSDD) shows a compositional bias: basic and acidic residues. Residues 453–478 (TVSASSSKQSRFRNNSSRDGINNSKS) show a composition bias toward polar residues.

Highly expressed in roots and meristemic regions of young seedlings. Expressed at low levels in stems, trichomes and stigma.

It is found in the mitochondrion. In terms of biological role, involved in the splicing of group II introns in mitochondria. Required for the splicing of mitochondrial introns found in nad1, nad2, nad4, nad5, nad7, rps3 and cox2 genes. Splicing of mitochondrial introns is crucial for mitochondrial biogenesis and function, plant growth and development, and plant response to abiotic stresses. The chain is CRM-domain containing factor CFM9, mitochondrial from Arabidopsis thaliana (Mouse-ear cress).